Here is a 519-residue protein sequence, read N- to C-terminus: ATP synthase subunit alpha (519 aa).

Position 174–181 (174–181) interacts with ATP; sequence GDRQTGKT.

This sequence belongs to the ATPase alpha/beta chains family. As to quaternary structure, F-type ATPases have 2 components, CF(1) - the catalytic core - and CF(0) - the membrane proton channel. CF(1) has five subunits: alpha(3), beta(3), gamma(1), delta(1), epsilon(1). CF(0) has three main subunits: a(1), b(2) and c(9-12). The alpha and beta chains form an alternating ring which encloses part of the gamma chain. CF(1) is attached to CF(0) by a central stalk formed by the gamma and epsilon chains, while a peripheral stalk is formed by the delta and b chains.

The protein localises to the cell inner membrane. The enzyme catalyses ATP + H2O + 4 H(+)(in) = ADP + phosphate + 5 H(+)(out). Produces ATP from ADP in the presence of a proton gradient across the membrane. The alpha chain is a regulatory subunit. This chain is ATP synthase subunit alpha, found in Acidovorax ebreus (strain TPSY) (Diaphorobacter sp. (strain TPSY)).